The chain runs to 424 residues: Tyrosine--tRNA ligase (424 aa).

Tyrosine 37 contacts L-tyrosine. Positions 42-51 (PTADSLHLGH) match the 'HIGH' region motif. 2 residues coordinate L-tyrosine: tyrosine 175 and glutamine 179. The 'KMSKS' region signature appears at 235–239 (KFGKT). Lysine 238 provides a ligand contact to ATP. An S4 RNA-binding domain is found at 357 to 414 (ADLQQALVNAELVPSRGQARTMIGSNAVTINGEKQSNAEYNFSDADRLFGRYTLLRRG).

The protein belongs to the class-I aminoacyl-tRNA synthetase family. TyrS type 1 subfamily. Homodimer.

The protein localises to the cytoplasm. The enzyme catalyses tRNA(Tyr) + L-tyrosine + ATP = L-tyrosyl-tRNA(Tyr) + AMP + diphosphate + H(+). In terms of biological role, catalyzes the attachment of tyrosine to tRNA(Tyr) in a two-step reaction: tyrosine is first activated by ATP to form Tyr-AMP and then transferred to the acceptor end of tRNA(Tyr). This chain is Tyrosine--tRNA ligase, found in Serratia proteamaculans (strain 568).